Reading from the N-terminus, the 484-residue chain is ATP synthase subunit beta (484 aa).

Residue 156-163 (GGAGVGKT) participates in ATP binding.

This sequence belongs to the ATPase alpha/beta chains family. In terms of assembly, F-type ATPases have 2 components, CF(1) - the catalytic core - and CF(0) - the membrane proton channel. CF(1) has five subunits: alpha(3), beta(3), gamma(1), delta(1), epsilon(1). CF(0) has three main subunits: a(1), b(2) and c(9-12). The alpha and beta chains form an alternating ring which encloses part of the gamma chain. CF(1) is attached to CF(0) by a central stalk formed by the gamma and epsilon chains, while a peripheral stalk is formed by the delta and b chains.

The protein resides in the cell inner membrane. The catalysed reaction is ATP + H2O + 4 H(+)(in) = ADP + phosphate + 5 H(+)(out). Produces ATP from ADP in the presence of a proton gradient across the membrane. The catalytic sites are hosted primarily by the beta subunits. This is ATP synthase subunit beta from Rhizorhabdus wittichii (strain DSM 6014 / CCUG 31198 / JCM 15750 / NBRC 105917 / EY 4224 / RW1) (Sphingomonas wittichii).